Reading from the N-terminus, the 454-residue chain is Innexin-19 (454 aa).

Residues 1–48 are Cytoplasmic-facing; that stretch reads MWRTPASTGPLRQDRQMFFHATLARSFINALSVRGDDDAVDRLNYYYT. The helical transmembrane segment at 49-69 threads the bilayer; that stretch reads PLILAVCCLVISAKQYGGTPI. The Extracellular segment spans residues 70 to 118; sequence ECWVNPHSRESMEEYIESYCWIQNTYWIPMYENVPDDHTAREEKQIGYY. The helical transmembrane segment at 119 to 139 threads the bilayer; the sequence is QWVPFILIAEALMFSLPCIFW. At 140 to 214 the chain is on the cytoplasmic side; that stretch reads RLCSFQSGLN…SRFLSGQCLS (75 aa). The chain crosses the membrane as a helical span at residues 215 to 235; sequence ILHSFTKLLYSMNVVAQFLIL. The Extracellular segment spans residues 236-300; sequence NACLKSSDFL…ALLINIINEK (65 aa). A helical transmembrane segment spans residues 301–321; sequence VFAFLWCWYMILAIITTCSFI. Over 322–454 the chain is Cytoplasmic; that stretch reads YWIANSFIHS…SNPGQTKSFL (133 aa).

The protein belongs to the pannexin family. Specifically expressed in sensory neurons and interneurons in the head and tail. Expressed in neurons AWC, ASH, AFD, ASI, ADL, ASK, BAG, AWB, and ADF (head sensory neurons); ADA, AIZ, RIC, AIY, and AIM (head interneurons); PHA and PHB (tail sensory neurons); and PVC and PVQ (tail interneurons).

It is found in the cell membrane. The protein resides in the cell junction. The protein localises to the gap junction. In terms of biological role, structural component of the gap junctions that specifically coordinates left-right asymmetry in the developing nervous system. Acts by forming gap junction network linking embryonic neurons and providing electrical coupling between cells, leading to promote or inhibit AWC signaling. Required for the left and right AWC olfactory neurons to establish asymmetric patterns of gene expression during embryogenesis. Acts autonomously. The chain is Innexin-19 (inx-19) from Caenorhabditis elegans.